Reading from the N-terminus, the 256-residue chain is Imidazole glycerol phosphate synthase subunit HisF (256 aa).

Catalysis depends on residues D11 and D130.

This sequence belongs to the HisA/HisF family. Heterodimer of HisH and HisF.

The protein resides in the cytoplasm. It catalyses the reaction 5-[(5-phospho-1-deoxy-D-ribulos-1-ylimino)methylamino]-1-(5-phospho-beta-D-ribosyl)imidazole-4-carboxamide + L-glutamine = D-erythro-1-(imidazol-4-yl)glycerol 3-phosphate + 5-amino-1-(5-phospho-beta-D-ribosyl)imidazole-4-carboxamide + L-glutamate + H(+). It participates in amino-acid biosynthesis; L-histidine biosynthesis; L-histidine from 5-phospho-alpha-D-ribose 1-diphosphate: step 5/9. Functionally, IGPS catalyzes the conversion of PRFAR and glutamine to IGP, AICAR and glutamate. The HisF subunit catalyzes the cyclization activity that produces IGP and AICAR from PRFAR using the ammonia provided by the HisH subunit. This chain is Imidazole glycerol phosphate synthase subunit HisF, found in Cupriavidus necator (strain ATCC 17699 / DSM 428 / KCTC 22496 / NCIMB 10442 / H16 / Stanier 337) (Ralstonia eutropha).